Consider the following 111-residue polypeptide: uncharacterized protein (111 aa).

Transmembrane regions (helical) follow at residues 45–65 (AFLI…LLVI) and 91–111 (LPAG…ILHI).

Its subcellular location is the cell membrane. This is an uncharacterized protein from Methanothermobacter thermautotrophicus (strain ATCC 29096 / DSM 1053 / JCM 10044 / NBRC 100330 / Delta H) (Methanobacterium thermoautotrophicum).